A 159-amino-acid chain; its full sequence is MDKPRKENEEEPQSAPKTDEERPPVEHSPEKQSLEEQSSEEQSSEEEFFPEELLPELLPEMLLSEERPPQEGLSRKDLFEGRPPMEQPPCGVGKHKLEEGSFKERLARSRPQFRGDIHGRNLSNEEMIQAADELEEMKRVRNKLMIMHWKAKRSRPYPI.

Residues 1–99 form a disordered region; it reads MDKPRKENEE…CGVGKHKLEE (99 aa). Basic and acidic residues predominate over residues 17–34; that stretch reads KTDEERPPVEHSPEKQSL. A compositionally biased stretch (acidic residues) spans 37–54; it reads QSSEEQSSEEEFFPEELL. Basic and acidic residues predominate over residues 64 to 80; sequence SEERPPQEGLSRKDLFE.

Belongs to the TFS-II family. TFA subfamily.

The protein localises to the nucleus. Functionally, may be involved in transcriptional regulation. Modulates various viral and cellular promoters in a promoter context-dependent manner. Does not bind DNA directly. This chain is Transcription elongation factor A protein-like 1, found in Ateles geoffroyi (Black-handed spider monkey).